The following is a 291-amino-acid chain: Potassium-transporting ATPase subunit beta (291 aa).

Residues 1–36 (MAALQEKKTCGQRMEEFQRYCWNPDTGQMLGRTLSR) are Cytoplasmic-facing. The chain crosses the membrane as a helical; Signal-anchor for type II membrane protein span at residues 37–57 (WVWISLYYVAFYVVMTGLFAL). Residues 58–291 (CLYVLMQTVD…KVEFKLKIEK (234 aa)) lie on the Extracellular side of the membrane. Residues Asn-99, Asn-103, Asn-130, Asn-146, and Asn-161 are each glycosylated (N-linked (GlcNAc...) asparagine). Cys-131 and Cys-152 are oxidised to a cystine. Cys-162 and Cys-178 are oxidised to a cystine. Asn-193 and Asn-222 each carry an N-linked (GlcNAc...) asparagine glycan. Residues 194 to 291 (GSAPRVDCAF…KVEFKLKIEK (98 aa)) form an immunoglobulin-like region. Cys-201 and Cys-263 form a disulfide bridge.

This sequence belongs to the X(+)/potassium ATPases subunit beta family. The ATPase pump is composed of two subunits: alpha (catalytic) and beta (regulatory). Interacts with alpha subunit ATP12A; this interaction is required for the formation of a functionally active pump and targeting at the plasma membrane. Interacts (via N-terminus) with alpha subunit ATP4A (via the P-domain). In terms of processing, N-glycosylation is necessary for assembly and functional expression of the pump at the plasma membrane.

The protein localises to the apical cell membrane. Its subcellular location is the cell membrane. Its function is as follows. The beta subunit of the gastric H(+)/K(+) ATPase pump which transports H(+) ions in exchange for K(+) ions across the apical membrane of parietal cells. Plays a structural and regulatory role in the assembly and membrane targeting of a functionally active pump. Within a transport cycle, the transfer of a H(+) ion across the membrane is coupled to ATP hydrolysis and is associated with a transient phosphorylation of the alpha subunit that shifts the pump conformation from inward-facing (E1) to outward-facing state (E2). Interacts with the phosphorylation domain of the alpha subunit and functions as a ratchet, stabilizing the lumenal-open E2 conformation and preventing the reverse reaction of the transport cycle. This chain is Potassium-transporting ATPase subunit beta, found in Homo sapiens (Human).